The primary structure comprises 1050 residues: uncharacterized protein (1050 aa).

At 1-83 the chain is on the cytoplasmic side; sequence MARLLTKSSQ…AVKLGTFEGC (83 aa). Residues S9 and S60 each carry the phosphoserine modification. T64 bears the Phosphothreonine mark. The chain crosses the membrane as a helical span at residues 84–104; that stretch reads FIPTTLNVLSILLYLRFPWII. Over 105 to 112 the chain is Extracellular; the sequence is GEAGVLKT. A helical membrane pass occupies residues 113 to 133; it reads LLMLFISYAVGIFTSLSISAI. Residues 134–146 lie on the Cytoplasmic side of the membrane; sequence CTNGMVRGGGAYY. Residues 147–169 traverse the membrane as a helical segment; sequence AVSRSIGPELGGSIGLIFYVGQI. Residues 170 to 202 are Extracellular-facing; it reads LNTGMNISGFVEPIISIFGKESGTISQFLPEGY. N-linked (GlcNAc...) asparagine glycosylation occurs at N175. A helical membrane pass occupies residues 203 to 223; it reads WWVFLYTTCVLAMCCILCCLG. At 224–232 the chain is on the cytoplasmic side; the sequence is SAIFAKASN. A helical membrane pass occupies residues 233–253; it reads ALFVVIILSTISIPISSIFVH. Over 254–295 the chain is Extracellular; the sequence is PFKDPSLLVHFTGLKWSTLMKNLASAYTENEKGTGYESFKST. Residue S270 is modified to Phosphoserine. T271 carries the post-translational modification Phosphothreonine. Residues 296-316 traverse the membrane as a helical segment; sequence FGVFFPATAGLLAGASMSGDL. Residues 317–334 are Cytoplasmic-facing; the sequence is KAPSRSIPKGTISSQATT. A helical transmembrane segment spans residues 335–355; the sequence is FLLYLLVILCVGASVTRTGLL. Over 356–368 the chain is Extracellular; it reads LDMDVMEHISLHP. The chain crosses the membrane as a helical span at residues 369–389; it reads LFIISGILSSGAFSSFMGIFG. The Cytoplasmic segment spans residues 390 to 417; sequence AAKLLQAIARDDLIPGMFFFAKGSSYDD. Residues 418-438 form a helical membrane-spanning segment; that stretch reads IPYVAIGVTYLITQISLFWDI. Residues 439 to 442 are Extracellular-facing; that stretch reads NMLS. The helical transmembrane segment at 443 to 463 threads the bilayer; it reads SMITMTFLLTFGFINLSCFLL. Residues 464-480 are Cytoplasmic-facing; sequence RISSTPNFRPTFRYFNR. A helical transmembrane segment spans residues 481 to 497; that stretch reads RTTLVGTILSFGVMFYV. Over 498–499 the chain is Extracellular; that stretch reads DR. The helical transmembrane segment at 500-520 threads the bilayer; the sequence is LNAFISFLIAGILVVVIYFTC. Topologically, residues 521–1050 are cytoplasmic; the sequence is PPKNWGDVSQ…SKSLTITTAL (530 aa). S901 carries the phosphoserine modification. Residues 915-943 form a disordered region; sequence ETESSFGNRSLSPKQENRRTYSDSTIESS. Residues 916–928 are compositionally biased toward polar residues; sequence TESSFGNRSLSPK. S936 carries the post-translational modification Phosphoserine. Phosphothreonine is present on T939.

This sequence belongs to the SLC12A transporter family.

The protein localises to the membrane. This is an uncharacterized protein from Schizosaccharomyces pombe (strain 972 / ATCC 24843) (Fission yeast).